We begin with the raw amino-acid sequence, 471 residues long: Tumor necrosis factor receptor superfamily member 1A (471 aa).

A signal peptide spans 1–29 (MGLPTVPGLLLPLVLPALLADVYPAGVQG). Topologically, residues 30–210 (LVPHPGDLEK…GKDSQDPGTT (181 aa)) are extracellular. TNFR-Cys repeat units follow at residues 43–82 (PCPQ…TDCR), 83–125 (VCAP…DTVC), 126–166 (GCRK…DTIC), and 167–195 (HCHM…KLCP). 7 disulfides stabilise this stretch: cysteine 44-cysteine 58, cysteine 59-cysteine 72, cysteine 62-cysteine 81, cysteine 84-cysteine 99, cysteine 102-cysteine 117, cysteine 105-cysteine 125, and cysteine 127-cysteine 143. The N-linked (GlcNAc...) asparagine glycan is linked to asparagine 54. Asparagine 145 and asparagine 151 each carry an N-linked (GlcNAc...) asparagine glycan. 5 disulfides stabilise this stretch: cysteine 146-cysteine 158, cysteine 149-cysteine 166, cysteine 168-cysteine 179, cysteine 182-cysteine 194, and cysteine 185-cysteine 190. The helical transmembrane segment at 211–233 (VLLPLVIVFGLCLASFASVVLAC) threads the bilayer. The Cytoplasmic portion of the chain corresponds to 234-471 (RYQRWKPKLY…RLASEPRLLW (238 aa)). The interval 340–360 (TPGPPASTHLCTPVQKWEASA) is N-SMase activation domain (NSD). The 86-residue stretch at 372-457 (PATLYAVVDG…GCLENIEEAL (86 aa)) folds into the Death domain.

Binding of TNF to the extracellular domain leads to homotrimerization. The aggregated death domains provide a novel molecular interface that interacts specifically with the death domain of TRADD. Various TRADD-interacting proteins such as TRAFS, RIPK1 and possibly FADD, are recruited to the complex by their association with TRADD. This complex activates at least two distinct signaling cascades, apoptosis and NF-kappa-B signaling. Interacts with BAG4, BABAM2, FEM1B, GRB2, SQSTM1 and TRPC4AP. Interacts directly with NOL3 (via CARD domain); inhibits TNF-signaling pathway. Interacts with SH3RF2, TRADD and RIPK1. SH3RF2 facilitates the recruitment of RIPK1 and TRADD to TNFRSF1A in a TNF-alpha-dependent process. Interacts with PGLYRP1; this interaction is important for cell death induction. Interacts (via death domain) with MADD (via death domain).

It is found in the cell membrane. Its subcellular location is the golgi apparatus membrane. In terms of biological role, receptor for TNFSF2/TNF-alpha and homotrimeric TNFSF1/lymphotoxin-alpha. The adapter molecule FADD recruits caspase-8 to the activated receptor. The resulting death-inducing signaling complex (DISC) performs caspase-8 proteolytic activation which initiates the subsequent cascade of caspases (aspartate-specific cysteine proteases) mediating apoptosis. The chain is Tumor necrosis factor receptor superfamily member 1A (TNFRSF1A) from Bos taurus (Bovine).